The primary structure comprises 376 residues: Peroxisomal membrane protein PEX27 (376 aa).

Homooligomer. Interacts with PEX25 and PEX34.

The protein localises to the peroxisome membrane. Functionally, required for regulation of peroxisome size and number. Also promotes peroxisome division and biogenesis. This chain is Peroxisomal membrane protein PEX27 (PEX27), found in Saccharomyces cerevisiae (strain ATCC 204508 / S288c) (Baker's yeast).